The primary structure comprises 344 residues: Protein BIM1 (344 aa).

N-acetylserine is present on serine 2. The region spanning 6-107 is the Calponin-homology (CH) domain; that stretch reads GESRTELLTW…FLQWLKKHWI (102 aa). The tract at residues 126 to 173 is disordered; sequence IITNNSATKPRTVSNPTTAKRSSSTGTGSAMSGGLATRHSSLGINGSR. A compositionally biased stretch (polar residues) spans 127–146; that stretch reads ITNNSATKPRTVSNPTTAKR. Residues 147 to 159 are compositionally biased toward low complexity; that stretch reads SSSTGTGSAMSGG. Serine 157 bears the Phosphoserine mark. The segment covering 163-173 has biased composition (polar residues); sequence RHSSLGINGSR. An EB1 C-terminal domain is found at 188 to 281; it reads ELTKSQETIG…LYATAEGFEM (94 aa). A disordered region spans residues 292–312; that stretch reads NLGEHGTVPNQGGYANSNGEV.

Belongs to the MAPRE family.

It localises to the cytoplasm. The protein localises to the cytoskeleton. Functionally, binds microtubules. This is Protein BIM1 (BIM1) from Saccharomyces cerevisiae (strain ATCC 204508 / S288c) (Baker's yeast).